Here is a 546-residue protein sequence, read N- to C-terminus: MSAKEVKFGVNARDRMLRGVDILANAVQVTLGPKGRNVVLDKSFGAPRITKDGVAVAKEIELDDKFENMGAQMVREVASKAADAAGDGTTTATVLAAAIVREGAKSVAAGMNPMDLKRGIDLAVEAVVADLQKNSKKVTSNDEIAQVGAISANGDQEIGKFLADAVKKVGNEGVITVEEAKSLETELDVVEGMQFDRGYISPYFVTNADKMRVEMDDAYILINEKKLSSLNELLPLLEAVVQTGKPLVIVAEDVEGEALATLVVNRLRGGLKVAAVKAPGFGDRRKAMLQDIAILTGGQAISEDLGIKLENVTLNMLGRAKKVMIDKENTTIVNGAGKKADIEARVAQIKAQIEETTSDYDREKLQERLAKLAGGVAVIRVGGATEVEVKERKDRVDDAMHATRAAVEEGIVPGGGVALLRASEQLKGLRTENDDQKTGVEIVRKALSWPARQIAINAGEDGSIVVGKVLDNEQYSFGFDAQTGEYSNLVSKGIIDPAKVVRIAVQNASSVAGLLITTEAMVAELPKKATAGPAMPAAPGMGGMDF.

ATP contacts are provided by residues 30–33 (TLGP), Lys-51, 87–91 (DGTTT), Gly-415, and Asp-496.

This sequence belongs to the chaperonin (HSP60) family. As to quaternary structure, forms a cylinder of 14 subunits composed of two heptameric rings stacked back-to-back. Interacts with the co-chaperonin GroES.

It is found in the cytoplasm. The enzyme catalyses ATP + H2O + a folded polypeptide = ADP + phosphate + an unfolded polypeptide.. Together with its co-chaperonin GroES, plays an essential role in assisting protein folding. The GroEL-GroES system forms a nano-cage that allows encapsulation of the non-native substrate proteins and provides a physical environment optimized to promote and accelerate protein folding. This is Chaperonin GroEL 3 from Bradyrhizobium diazoefficiens (strain JCM 10833 / BCRC 13528 / IAM 13628 / NBRC 14792 / USDA 110).